The primary structure comprises 305 residues: Putative glutamine--fructose-6-phosphate aminotransferase [isomerizing] (305 aa).

Cysteine 2 functions as the Nucleophile; for GATase activity in the catalytic mechanism. The Glutamine amidotransferase type-2 domain maps to 2 to 305; the sequence is CGIFGYCNFL…RLCITSAVCE (304 aa).

It carries out the reaction D-fructose 6-phosphate + L-glutamine = D-glucosamine 6-phosphate + L-glutamate. It participates in nucleotide-sugar biosynthesis; UDP-N-acetyl-alpha-D-glucosamine biosynthesis; alpha-D-glucosamine 6-phosphate from D-fructose 6-phosphate: step 1/1. Its function is as follows. Involved in amino sugar synthesis (formation of chitin, supplies the amino sugars of asparagine-linked oligosaccharides of glycoproteins). This chain is Putative glutamine--fructose-6-phosphate aminotransferase [isomerizing], found in Saccharomyces cerevisiae (strain Lalvin EC1118 / Prise de mousse) (Baker's yeast).